Consider the following 1050-residue polypeptide: ATP-dependent DNA helicase MPH1 (1050 aa).

A Helicase ATP-binding domain is found at 95–262 (IVQRAFYHNL…EIIDNLNISK (168 aa)). 108–115 (LPTGLGKT) is a binding site for ATP. A DEAH box motif is present at residues 210–213 (DEAH). A Helicase C-terminal domain is found at 431–631 (KIEAMMEELD…LIDLKEQNRM (201 aa)). Disordered regions lie at residues 493 to 524 (DESN…AQIN) and 743 to 821 (DSDE…PPKR). A compositionally biased stretch (basic residues) spans 499–508 (KKSKGKRVGK). Basic and acidic residues predominate over residues 786–799 (RTLDQHHSASEERG). Polar residues predominate over residues 800–810 (INSNFSHESNL).

The protein belongs to the DEAD box helicase family. DEAH subfamily. FANCM sub-subfamily. In terms of assembly, interacts with the MHF histone-fold complex to form the FANCM-MHF complex.

It localises to the nucleus. The enzyme catalyses ATP + H2O = ADP + phosphate + H(+). In terms of biological role, ATP-dependent DNA helicase involved in DNA damage repair by homologous recombination and in genome maintenance. Capable of unwinding D-loops. Plays a role in limiting crossover recombinants during mitotic DNA double-strand break (DSB) repair. Component of a FANCM-MHF complex which promotes gene conversion at blocked replication forks, probably by reversal of the stalled fork. This is ATP-dependent DNA helicase MPH1 from Scheffersomyces stipitis (strain ATCC 58785 / CBS 6054 / NBRC 10063 / NRRL Y-11545) (Yeast).